The chain runs to 310 residues: 2-ketogluconate reductase (310 aa).

Residues 151–152 and 227–229 each bind NADP(+); these read HI and IAR. Catalysis depends on residues Arg229 and Glu258. His276 serves as the catalytic Proton donor.

The protein belongs to the D-isomer specific 2-hydroxyacid dehydrogenase family. In terms of assembly, homohexamer.

It catalyses the reaction D-gluconate + NADP(+) = 2-dehydro-D-gluconate + NADPH + H(+). In terms of biological role, catalyzes the reduction of 2-keto-D-gluconate to gluconate. Can also catalyze the reduction of 2-keto-L-gulonate. Can use both NADH and NADPH efficiently, with a slight preference for NADPH. This is 2-ketogluconate reductase from Gluconobacter oxydans (strain 621H) (Gluconobacter suboxydans).